Here is a 306-residue protein sequence, read N- to C-terminus: Uracil phosphoribosyltransferase homolog (306 aa).

Disordered regions lie at residues 1 to 28 and 58 to 87; these read MATE…NPEP and SSVP…NYDA. 2 stretches are compositionally biased toward polar residues: residues 13-28 and 70-79; these read CHNQ…NPEP and GGATFNSENN. GTP contacts are provided by residues Arg130, Arg139, and 173 to 176; that span reads EKGN. Arg183 is a 5-phospho-alpha-D-ribose 1-diphosphate binding site. Positions 200 and 229 each coordinate GTP. 235 to 243 provides a ligand contact to 5-phospho-alpha-D-ribose 1-diphosphate; it reads YPILSTGNT. Position 296-298 (296-298) interacts with uracil; it reads THF.

It belongs to the UPRTase family.

It localises to the cytoplasm. The protein resides in the nucleus. In Bos taurus (Bovine), this protein is Uracil phosphoribosyltransferase homolog (UPRT).